The following is a 79-amino-acid chain: RNA-binding protein Hfq (79 aa).

Residues aspartate 10–valine 69 form the Sm domain.

The protein belongs to the Hfq family. In terms of assembly, homohexamer.

In terms of biological role, RNA chaperone that binds small regulatory RNA (sRNAs) and mRNAs to facilitate mRNA translational regulation in response to envelope stress, environmental stress and changes in metabolite concentrations. Also binds with high specificity to tRNAs. The polypeptide is RNA-binding protein Hfq (Burkholderia cenocepacia (strain HI2424)).